We begin with the raw amino-acid sequence, 327 residues long: MKEIKLNSDSLEIYEKSASKKLNRNDLIDLWNLDLNDLLDISYALKKLFNKDKIDLCSIMNAKSGICPENCIFCSQSKHNSSKIDTYELKSKEEILKNAKSVEKYSNRFSIVVSGKTVTDLEFEKIIESIEEIQNKTKLKVCVSLGLLNKDQLKALNEKNVRIHNNLETSENYFKNICTTHDYNDKIKVILEAKKIGLEMCSGGIFGMGESIDDRINLFLDLKKLGVDSIALNLLNPIYGTKIYDRINSGDISPINSIGALKSLCIARITLPNKVIRLCGGREHVLKDMQKYSLLAIDGLMIGNYLTTNGQNIQSDLKMIEEMGFER.

The region spanning 49-282 is the Radical SAM core domain; it reads FNKDKIDLCS…NKVIRLCGGR (234 aa). [4Fe-4S] cluster-binding residues include Cys-67, Cys-71, and Cys-74. 4 residues coordinate [2Fe-2S] cluster: Ser-110, Cys-142, Cys-201, and Arg-277.

This sequence belongs to the radical SAM superfamily. Biotin synthase family. Homodimer. [4Fe-4S] cluster serves as cofactor. [2Fe-2S] cluster is required as a cofactor.

It catalyses the reaction (4R,5S)-dethiobiotin + (sulfur carrier)-SH + 2 reduced [2Fe-2S]-[ferredoxin] + 2 S-adenosyl-L-methionine = (sulfur carrier)-H + biotin + 2 5'-deoxyadenosine + 2 L-methionine + 2 oxidized [2Fe-2S]-[ferredoxin]. It participates in cofactor biosynthesis; biotin biosynthesis; biotin from 7,8-diaminononanoate: step 2/2. Functionally, catalyzes the conversion of dethiobiotin (DTB) to biotin by the insertion of a sulfur atom into dethiobiotin via a radical-based mechanism. This Methanococcus maripaludis (strain C5 / ATCC BAA-1333) protein is Biotin synthase.